We begin with the raw amino-acid sequence, 198 residues long: Nucleoside triphosphate pyrophosphatase (198 aa).

Asp72 acts as the Proton acceptor in catalysis.

The protein belongs to the Maf family. The cofactor is a divalent metal cation.

The protein resides in the cytoplasm. The catalysed reaction is a ribonucleoside 5'-triphosphate + H2O = a ribonucleoside 5'-phosphate + diphosphate + H(+). The enzyme catalyses a 2'-deoxyribonucleoside 5'-triphosphate + H2O = a 2'-deoxyribonucleoside 5'-phosphate + diphosphate + H(+). Nucleoside triphosphate pyrophosphatase. May have a dual role in cell division arrest and in preventing the incorporation of modified nucleotides into cellular nucleic acids. This chain is Nucleoside triphosphate pyrophosphatase, found in Corynebacterium diphtheriae (strain ATCC 700971 / NCTC 13129 / Biotype gravis).